The chain runs to 329 residues: Alternative oxidase, mitochondrial (329 aa).

A helical transmembrane segment spans residues 115–135 (VISRCLFLETVAGVPGMVGGM). Fe cation contacts are provided by glutamate 123, glutamate 162, and histidine 165. A helical transmembrane segment spans residues 181–201 (VSIIITQAIMYLFLLVAYVIS). Residues glutamate 213, glutamate 266, and histidine 269 each contribute to the Fe cation site. Positions 300–329 (EMYSNQPSGKTRTDFGSEGAKTASNVNKHV) are disordered.

This sequence belongs to the alternative oxidase family. Homodimer; disulfide-linked. The cofactor is Fe cation.

The protein resides in the mitochondrion inner membrane. Its function is as follows. Catalyzes cyanide-resistant oxygen consumption. May increase respiration when the cytochrome respiratory pathway is restricted, or in response to low temperatures. This chain is Alternative oxidase, mitochondrial (AOX), found in Trypanosoma brucei brucei.